We begin with the raw amino-acid sequence, 400 residues long: Nicotinate phosphoribosyltransferase (400 aa).

Histidine 220 carries the phosphohistidine; by autocatalysis modification.

This sequence belongs to the NAPRTase family. Transiently phosphorylated on a His residue during the reaction cycle. Phosphorylation strongly increases the affinity for substrates and increases the rate of nicotinate D-ribonucleotide production. Dephosphorylation regenerates the low-affinity form of the enzyme, leading to product release.

It catalyses the reaction nicotinate + 5-phospho-alpha-D-ribose 1-diphosphate + ATP + H2O = nicotinate beta-D-ribonucleotide + ADP + phosphate + diphosphate. It functions in the pathway cofactor biosynthesis; NAD(+) biosynthesis; nicotinate D-ribonucleotide from nicotinate: step 1/1. Catalyzes the synthesis of beta-nicotinate D-ribonucleotide from nicotinate and 5-phospho-D-ribose 1-phosphate at the expense of ATP. This Escherichia coli O7:K1 (strain IAI39 / ExPEC) protein is Nicotinate phosphoribosyltransferase.